Here is a 325-residue protein sequence, read N- to C-terminus: Beta-ketoacyl-[acyl-carrier-protein] synthase III 2 (325 aa).

Catalysis depends on residues Cys113 and His250. Residues 251-255 (SANLR) are ACP-binding. Residue Asn280 is part of the active site.

It belongs to the thiolase-like superfamily. FabH family. In terms of assembly, homodimer.

It is found in the cytoplasm. It catalyses the reaction 3-methylbutanoyl-CoA + malonyl-[ACP] + H(+) = 5-methyl-3-oxohexanoyl-[ACP] + CO2 + CoA. The enzyme catalyses 2-methylpropanoyl-CoA + malonyl-[ACP] + H(+) = 4-methyl-3-oxopentanoyl-[ACP] + CO2 + CoA. It carries out the reaction (2S)-2-methylbutanoyl-CoA + malonyl-[ACP] + H(+) = (4S)-4-methyl-3-oxohexanoyl-[ACP] + CO2 + CoA. The catalysed reaction is malonyl-[ACP] + acetyl-CoA + H(+) = 3-oxobutanoyl-[ACP] + CO2 + CoA. It catalyses the reaction malonyl-[ACP] + propanoyl-CoA + H(+) = 3-oxopentanoyl-[ACP] + CO2 + CoA. The enzyme catalyses butanoyl-CoA + malonyl-[ACP] + H(+) = 3-oxohexanoyl-[ACP] + CO2 + CoA. It carries out the reaction pentanoyl-CoA + malonyl-[ACP] + H(+) = 3-oxoheptanoyl-[ACP] + CO2 + CoA. The catalysed reaction is hexanoyl-CoA + malonyl-[ACP] + H(+) = 3-oxooctanoyl-[ACP] + CO2 + CoA. It catalyses the reaction heptanoyl-CoA + malonyl-[ACP] + H(+) = 3-oxononanoyl-[ACP] + CO2 + CoA. The protein operates within lipid metabolism; fatty acid biosynthesis. Functionally, catalyzes the condensation reaction of fatty acid synthesis by the addition to an acyl acceptor of two carbons from malonyl-ACP. Catalyzes the first condensation reaction which initiates fatty acid synthesis and may therefore play a role in governing the total rate of fatty acid production. Possesses both acetoacetyl-ACP synthase and acetyl transacylase activities. Has some substrate specificity for branched chain acyl-CoA, determining the biosynthesis of branched-chain of fatty acids instead of straight-chain. This Bacillus subtilis (strain 168) protein is Beta-ketoacyl-[acyl-carrier-protein] synthase III 2.